The following is a 177-amino-acid chain: Large ribosomal subunit protein uL6 (177 aa).

The span at 152 to 171 (RPPEPYKGKGVRYDDEEVRR) shows a compositional bias: basic and acidic residues. A disordered region spans residues 152-177 (RPPEPYKGKGVRYDDEEVRRKEAKKK).

It belongs to the universal ribosomal protein uL6 family. In terms of assembly, part of the 50S ribosomal subunit.

Functionally, this protein binds to the 23S rRNA, and is important in its secondary structure. It is located near the subunit interface in the base of the L7/L12 stalk, and near the tRNA binding site of the peptidyltransferase center. The chain is Large ribosomal subunit protein uL6 from Shewanella putrefaciens (strain CN-32 / ATCC BAA-453).